The following is a 526-amino-acid chain: MFS-type transporter clz19 (526 aa).

The disordered stretch occupies residues 1–49; that stretch reads MNVDTTSPQAPLAGVESKQDGASNEATAKAESTTHDQNESSSFDERPVH. Positions 32-49 are enriched in basic and acidic residues; sequence STTHDQNESSSFDERPVH. Asn-38 is a glycosylation site (N-linked (GlcNAc...) asparagine). A helical transmembrane segment spans residues 59-79; that stretch reads ALLAVASFAAAISPASTTTYY. An N-linked (GlcNAc...) asparagine glycan is attached at Asn-97. Helical transmembrane passes span 126 to 143, 186 to 206, and 214 to 234; these read VYLV…GLAL, AYLT…GGLL, and AIFW…LTFF. 2 N-linked (GlcNAc...) asparagine glycosylation sites follow: Asn-238 and Asn-253. 6 consecutive transmembrane segments (helical) span residues 294 to 314, 322 to 342, 384 to 404, 411 to 431, 446 to 466, and 473 to 493; these read FIVC…ISIF, YGYS…GSIL, LTVS…YGWL, VASV…VLIA, ALGA…VAAV, and IGIG…LPAL.

The protein belongs to the major facilitator superfamily.

It is found in the membrane. MFS-type transporter; part of the gene cluster that mediates the biosynthesis of squalestatin S1 (SQS1, also known as zaragozic acid A), a heavily oxidized fungal polyketide that offers potent cholesterol lowering activity by targeting squalene synthase (SS). This chain is MFS-type transporter clz19, found in Cochliobolus lunatus (Filamentous fungus).